We begin with the raw amino-acid sequence, 65 residues long: Transcriptional regulatory protein SenS (65 aa).

A DNA-binding region (H-T-H motif) is located at residues 11–31; that stretch reads RFRKRKTYGNQILPLELLIEK.

To B.natto SenN.

Regulates the expression of extracellular-protein genes of Bacillus subtilis. The polypeptide is Transcriptional regulatory protein SenS (senS) (Bacillus subtilis (strain 168)).